The sequence spans 406 residues: Argininosuccinate synthase (406 aa).

ATP-binding positions include 14–22 (AYSGGLDTS) and A41. L-citrulline contacts are provided by Y92 and S97. G122 provides a ligand contact to ATP. 3 residues coordinate L-aspartate: T124, N128, and D129. An L-citrulline-binding site is contributed by N128. L-citrulline is bound by residues R132, S181, S190, E266, and Y278.

This sequence belongs to the argininosuccinate synthase family. Type 1 subfamily. Homotetramer.

It is found in the cytoplasm. The enzyme catalyses L-citrulline + L-aspartate + ATP = 2-(N(omega)-L-arginino)succinate + AMP + diphosphate + H(+). Its pathway is amino-acid biosynthesis; L-arginine biosynthesis; L-arginine from L-ornithine and carbamoyl phosphate: step 2/3. This chain is Argininosuccinate synthase, found in Geobacter metallireducens (strain ATCC 53774 / DSM 7210 / GS-15).